The sequence spans 100 residues: MQLTPQEKDKLLIFTAALLAERRKGRGLKLNYPEAIAYISAAILEGARDGQTVAELMSYGTTLLTRDDVMEGIPEMVHDVQVEATFPDGTKLVTVHNPIR.

The protein belongs to the urease gamma subunit family. As to quaternary structure, heterotrimer of UreA (gamma), UreB (beta) and UreC (alpha) subunits. Three heterotrimers associate to form the active enzyme.

It is found in the cytoplasm. The catalysed reaction is urea + 2 H2O + H(+) = hydrogencarbonate + 2 NH4(+). Its pathway is nitrogen metabolism; urea degradation; CO(2) and NH(3) from urea (urease route): step 1/1. The polypeptide is Urease subunit gamma (Nostoc punctiforme (strain ATCC 29133 / PCC 73102)).